The following is a 138-amino-acid chain: Basic phospholipase A2 homolog MjTX-I (138 aa).

Positions 1–16 (MRTLWIMAVLLVGVEG) are cleaved as a signal peptide. V34 lines the suramin pocket. 7 disulfides stabilise this stretch: C42/C132, C44/C60, C59/C111, C65/C138, C66/C104, C73/C97, and C91/C102. Varespladib is bound at residue N43. Suramin is bound by residues G45 and G48. Varespladib is bound by residues H63 and K64. Position 85 (K85) interacts with suramin.

It belongs to the phospholipase A2 family. Group II subfamily. K49 sub-subfamily. In terms of assembly, monomer in solution. Homodimer; non-covalently linked (probable conventional/extended dimer conformation). Homotetramer (dimer of homodimer (probable conventional/extended dimer conformation)); non-covalently linked. Homooligomer. In terms of tissue distribution, expressed by the venom gland.

The protein resides in the secreted. With respect to regulation, myotoxin activity is inhibited by suramin and varespladib. Inhibition by suramin may be caused by (i) distortion of MDiS from both monomers impairing the membrane disruption mechanism by the toxin and (ii) surface electrostatic changes of the complex that interfere with the toxin membrane dockage process (putative-MDoS is partially hidden). Inhibition by varespladib is probably through varespladib binding to MDoS. In terms of biological role, snake venom phospholipase A2 homolog that lacks enzymatic activity. In vivo, it displays local myotoxin and edema-inducing activities and is lethal by intraperitoneal injection. The myotoxicity effect is weaker in comparison to other myotoxins, probably due to the formation of high molecular weight complexes and to the oligomeric conformation (conventional dimer). It shows specificity toward neurons and myotubes, but not on a variety of other cell types. This PLA2 excites a cohort of sensory neurons via ATP release and consequent activation of P2RX2 and/or P2RX3 purinergic receptors. Pannexin hemichannels act as downstream mediators of toxin-evoked ATP release. In vivo, it elicits nonneurogenic inflammatory pain, thermal hyperalgesia, and mechanical allodynia, of which the latter is completely dependent on purinergic signaling. This chain is Basic phospholipase A2 homolog MjTX-I, found in Bothrops moojeni (Lance-headed viper).